A 118-amino-acid chain; its full sequence is Small ribosomal subunit protein uS13 (118 aa).

The tract at residues Gly94–Lys118 is disordered.

Belongs to the universal ribosomal protein uS13 family. In terms of assembly, part of the 30S ribosomal subunit. Forms a loose heterodimer with protein S19. Forms two bridges to the 50S subunit in the 70S ribosome.

In terms of biological role, located at the top of the head of the 30S subunit, it contacts several helices of the 16S rRNA. In the 70S ribosome it contacts the 23S rRNA (bridge B1a) and protein L5 of the 50S subunit (bridge B1b), connecting the 2 subunits; these bridges are implicated in subunit movement. Contacts the tRNAs in the A and P-sites. This is Small ribosomal subunit protein uS13 from Pseudomonas aeruginosa (strain LESB58).